The following is a 293-amino-acid chain: N(1)-aminopropylagmatine ureohydrolase (293 aa).

Mn(2+) contacts are provided by His105, Asp128, His130, Asp132, Asp210, and Asp212.

The protein belongs to the arginase family. Mn(2+) serves as cofactor.

The protein localises to the cytoplasm. The catalysed reaction is N(1)-(3-aminopropyl)agmatine + H2O = urea + spermidine. It participates in amine and polyamine biosynthesis; spermidine biosynthesis. In terms of biological role, involved in the biosynthesis of polyamines which are thought to support the growth of thermophilic microorganisms under high-temperature conditions. It seems that long-chain and branched-chain of polyamines effectively stabilize DNA and RNA, respectively. Catalyzes the decarboxylation of N1-(3-aminopropyl)agmatine to yield spermidine and urea. It cannot use agmatine as substrate. This is N(1)-aminopropylagmatine ureohydrolase from Thermus thermophilus (strain ATCC 27634 / DSM 579 / HB8).